Reading from the N-terminus, the 346-residue chain is Small ribosomal subunit biogenesis GTPase RsgA 2 (346 aa).

The region spanning 93–248 (EEQLIAANFD…VIDTPGMREF (156 aa)) is the CP-type G domain. Residues 138–141 (TKAD) and 190–198 (GSSGVGKSS) each bind GTP. Zn(2+)-binding residues include cysteine 271, cysteine 276, histidine 278, and cysteine 284.

It belongs to the TRAFAC class YlqF/YawG GTPase family. RsgA subfamily. As to quaternary structure, monomer. Associates with 30S ribosomal subunit, binds 16S rRNA. Requires Zn(2+) as cofactor.

The protein localises to the cytoplasm. One of several proteins that assist in the late maturation steps of the functional core of the 30S ribosomal subunit. Helps release RbfA from mature subunits. May play a role in the assembly of ribosomal proteins into the subunit. Circularly permuted GTPase that catalyzes slow GTP hydrolysis, GTPase activity is stimulated by the 30S ribosomal subunit. This Listeria monocytogenes serotype 4b (strain F2365) protein is Small ribosomal subunit biogenesis GTPase RsgA 2.